The primary structure comprises 539 residues: Chaperone Ric-8A (539 aa).

Positions 507–539 (MGITPSGNLAPMENAIRDMADERSSSDSDLGLD) are disordered. A compositionally biased stretch (basic and acidic residues) spans 521–532 (AIRDMADERSSS).

The protein belongs to the synembryn family.

It localises to the cytoplasm. The protein localises to the cell cortex. Functionally, chaperone that specifically binds and folds nascent G alpha proteins prior to G protein heterotrimer formation, promoting their stability and activity: folds GNAI1, GNAO1, GNA13 and GNAQ. Does not fold G(s) G-alpha proteins GNAS nor GNAL. Also acts as a guanine nucleotide exchange factor (GEF) for G alpha proteins by stimulating exchange of bound GDP for free GTP. This Gallus gallus (Chicken) protein is Chaperone Ric-8A (RIC8A).